Reading from the N-terminus, the 619-residue chain is Schlafen family member 12-like (619 aa).

The helical transmembrane segment at 598–618 (IFLFVCLFRFCLFVCLFVFFL) threads the bilayer.

The protein belongs to the Schlafen family.

Its subcellular location is the membrane. The polypeptide is Schlafen family member 12-like (SLFN12L) (Pongo abelii (Sumatran orangutan)).